Reading from the N-terminus, the 72-residue chain is MGRGGCAQLSYSELLSRRRELERKYLDLRFQLVVEHVDNKLMKRILRRQIAAVNTFLRHKELTELEKRGVRE.

This sequence belongs to the universal ribosomal protein uL29 family.

The chain is Large ribosomal subunit protein uL29 (rpmC) from Treponema pallidum (strain Nichols).